Reading from the N-terminus, the 310-residue chain is 26S proteasome non-ATPase regulatory subunit 14 (310 aa).

Residues 31 to 166 form the MPN domain; it reads VYISSLALLK…IDAFRLINAN (136 aa). Residues His-113, His-115, and Asp-126 each contribute to the Zn(2+) site. A JAMM motif motif is present at residues 113–126; the sequence is HSHPGFGCWLSGVD. A phosphoserine mark is found at Ser-150 and Ser-224. A Phosphothreonine modification is found at Thr-266.

The protein belongs to the peptidase M67A family. PSMD14 subfamily. As to quaternary structure, component of the 19S proteasome regulatory particle complex. The 26S proteasome consists of a 20S core particle (CP) and two 19S regulatory subunits (RP). The regulatory particle is made of a lid composed of 9 subunits including PSMD4, a base containing 6 ATPases and few additional components. Within the complex, PSMD4 interacts with subunit PSMD7 through their respective MPN domain. Interacts with TXNL1. As to expression, widely expressed. Highest levels in heart and skeletal muscle.

Functionally, component of the 26S proteasome, a multiprotein complex involved in the ATP-dependent degradation of ubiquitinated proteins. This complex plays a key role in the maintenance of protein homeostasis by removing misfolded or damaged proteins, which could impair cellular functions, and by removing proteins whose functions are no longer required. Therefore, the proteasome participates in numerous cellular processes, including cell cycle progression, apoptosis, or DNA damage repair. The PSMD14 subunit is a metalloprotease that specifically cleaves 'Lys-63'-linked polyubiquitin chains within the complex. Plays a role in response to double-strand breaks (DSBs): acts as a regulator of non-homologous end joining (NHEJ) by cleaving 'Lys-63'-linked polyubiquitin, thereby promoting retention of JMJD2A/KDM4A on chromatin and restricting TP53BP1 accumulation. Also involved in homologous recombination repair by promoting RAD51 loading. The chain is 26S proteasome non-ATPase regulatory subunit 14 (PSMD14) from Homo sapiens (Human).